The sequence spans 419 residues: Squalene synthase R6 (419 aa).

The helical transmembrane segment at Thr-397 to Ala-417 threads the bilayer.

It belongs to the phytoene/squalene synthase family. Requires Mg(2+) as cofactor.

The protein resides in the membrane. It carries out the reaction 2 (2E,6E)-farnesyl diphosphate + NADPH + H(+) = squalene + 2 diphosphate + NADP(+). The catalysed reaction is 2 (2E,6E)-farnesyl diphosphate + NADH + H(+) = squalene + 2 diphosphate + NAD(+). It participates in terpene metabolism; lanosterol biosynthesis; lanosterol from farnesyl diphosphate: step 1/3. Squalene synthase; part of the gene cluster that mediates the biosynthesis of squalestatin S1 (SQS1, also known as zaragozic acid A), a heavily oxidized fungal polyketide that offers potent cholesterol lowering activity by targeting squalene synthase (SS). Catalyzes the condensation of 2 two farnesyl pyrophosphate moieties to form squalene. The presence of a gene encoding a squalene synthase supports the identification of the cluster as being responsible for SQS1 production and suggests a likely mechanism for self-resistance. This Phoma sp. (strain ATCC 20986 / MF5453) protein is Squalene synthase R6.